The following is a 1158-amino-acid chain: ATP-dependent helicase/deoxyribonuclease subunit B (1158 aa).

Positions methionine 1–asparagine 275 constitute a UvrD-like helicase ATP-binding domain. Glycine 8–serine 15 provides a ligand contact to ATP. Positions asparagine 269–valine 583 constitute a UvrD-like helicase C-terminal domain. Cysteine 784, cysteine 1112, cysteine 1115, and cysteine 1121 together coordinate [4Fe-4S] cluster.

Belongs to the helicase family. AddB/RexB type 1 subfamily. As to quaternary structure, heterodimer of AddA and AddB. The cofactor is Mg(2+). [4Fe-4S] cluster is required as a cofactor.

Functionally, the heterodimer acts as both an ATP-dependent DNA helicase and an ATP-dependent, dual-direction single-stranded exonuclease. Recognizes the chi site generating a DNA molecule suitable for the initiation of homologous recombination. The AddB subunit has 5' -&gt; 3' nuclease activity but not helicase activity. The polypeptide is ATP-dependent helicase/deoxyribonuclease subunit B (Staphylococcus aureus (strain MSSA476)).